Consider the following 539-residue polypeptide: Phosphoenolpyruvate carboxykinase (ATP) (539 aa).

Arg64, Tyr206, and Lys212 together coordinate substrate. Residues Lys212, His231, and 247 to 255 (GLSGTGKTT) contribute to the ATP site. Lys212 and His231 together coordinate Mn(2+). Residue Asp268 participates in Mn(2+) binding. Residues Glu296, Arg332, 448–449 (RI), and Thr454 contribute to the ATP site. Substrate is bound at residue Arg332.

This sequence belongs to the phosphoenolpyruvate carboxykinase (ATP) family. As to quaternary structure, monomer. Mn(2+) is required as a cofactor.

The protein resides in the cytoplasm. It catalyses the reaction oxaloacetate + ATP = phosphoenolpyruvate + ADP + CO2. It participates in carbohydrate biosynthesis; gluconeogenesis. Functionally, involved in the gluconeogenesis. Catalyzes the conversion of oxaloacetate (OAA) to phosphoenolpyruvate (PEP) through direct phosphoryl transfer between the nucleoside triphosphate and OAA. This is Phosphoenolpyruvate carboxykinase (ATP) from Yersinia pseudotuberculosis serotype O:1b (strain IP 31758).